The primary structure comprises 469 residues: Putative dipeptidase MW1694 (469 aa).

Histidine 84 is a Zn(2+) binding site. The active site involves aspartate 86. Aspartate 115 contributes to the Zn(2+) binding site. The Proton acceptor role is filled by glutamate 149. Zn(2+) contacts are provided by glutamate 150, aspartate 173, and histidine 440.

It belongs to the peptidase M20A family. The cofactor is Zn(2+).

This is Putative dipeptidase MW1694 from Staphylococcus aureus (strain MW2).